Here is a 389-residue protein sequence, read N- to C-terminus: Formate-dependent phosphoribosylglycinamide formyltransferase (389 aa).

N(1)-(5-phospho-beta-D-ribosyl)glycinamide is bound by residues 15 to 16 (EL) and Glu75. ATP contacts are provided by residues Arg107, Lys148, 153–158 (SSGKGQ), 188–191 (EEFL), and Glu196. The 191-residue stretch at 112–302 (DLAAGELALR…EFELHLRAVL (191 aa)) folds into the ATP-grasp domain. Positions 261 and 273 each coordinate Mg(2+). Residues Asp280, Lys350, and 357–358 (RR) each bind N(1)-(5-phospho-beta-D-ribosyl)glycinamide.

This sequence belongs to the PurK/PurT family. Homodimer.

It catalyses the reaction N(1)-(5-phospho-beta-D-ribosyl)glycinamide + formate + ATP = N(2)-formyl-N(1)-(5-phospho-beta-D-ribosyl)glycinamide + ADP + phosphate + H(+). Its pathway is purine metabolism; IMP biosynthesis via de novo pathway; N(2)-formyl-N(1)-(5-phospho-D-ribosyl)glycinamide from N(1)-(5-phospho-D-ribosyl)glycinamide (formate route): step 1/1. Involved in the de novo purine biosynthesis. Catalyzes the transfer of formate to 5-phospho-ribosyl-glycinamide (GAR), producing 5-phospho-ribosyl-N-formylglycinamide (FGAR). Formate is provided by PurU via hydrolysis of 10-formyl-tetrahydrofolate. This chain is Formate-dependent phosphoribosylglycinamide formyltransferase, found in Synechococcus sp. (strain WH7803).